Consider the following 289-residue polypeptide: Protease HtpX (289 aa).

A run of 2 helical transmembrane segments spans residues 5 to 25 (IVLF…VMSL) and 33 to 53 (MSGL…ISLL). H140 serves as a coordination point for Zn(2+). E141 is a catalytic residue. Zn(2+) is bound at residue H144. 2 helical membrane passes run 155-175 (LLQG…GGFI) and 193-213 (GIVL…TMWF). E218 contacts Zn(2+).

It belongs to the peptidase M48B family. It depends on Zn(2+) as a cofactor.

The protein resides in the cell inner membrane. The polypeptide is Protease HtpX (Xylella fastidiosa (strain M12)).